The chain runs to 281 residues: MKTQEIEKKVRQQDAQVLAQGYSPAIRAMEIAAIVSFVSLEVALVYRLWGTPYAGTWLLLSAVLLGYLAADFVSGFVHWMGDTWGSTEMPVLGKALIRPFREHHVDEKAITRHDFVETNGNNCLISLPVAIIALCLPMSGPGWVFCASFLGAMIFWVMATNQFHKWSHMDSPPALVGFLQRVHLILPPDHHRIHHTKPYNKYYCITVGWMNKPLTMVHFFPTAERLITWATGLLPRQDDIGAEAARALVVAAGGSEAPVVQAAKELLTQATVQEKPASTRP.

Residues 1–28 are Cytoplasmic-facing; the sequence is MKTQEIEKKVRQQDAQVLAQGYSPAIRA. Residues 29–45 traverse the membrane as a helical segment; that stretch reads MEIAAIVSFVSLEVALV. The Periplasmic portion of the chain corresponds to 46–58; that stretch reads YRLWGTPYAGTWL. Residues 59–75 form a helical membrane-spanning segment; that stretch reads LLSAVLLGYLAADFVSG. Residues 76–123 lie on the Cytoplasmic side of the membrane; the sequence is FVHWMGDTWGSTEMPVLGKALIRPFREHHVDEKAITRHDFVETNGNNC. A helical transmembrane segment spans residues 124-138; the sequence is LISLPVAIIALCLPM. Over 139–142 the chain is Periplasmic; the sequence is SGPG. The helical transmembrane segment at 143–159 threads the bilayer; it reads WVFCASFLGAMIFWVMA. Over 160 to 281 the chain is Cytoplasmic; sequence TNQFHKWSHM…VQEKPASTRP (122 aa). Positions 164-168 match the Histidine box-1 motif; the sequence is HKWSH. The Histidine box-2 motif lies at 191-195; that stretch reads HRIHH.

This sequence belongs to the fatty acid desaturase CarF family. Interacts with CarR.

It localises to the cell inner membrane. The enzyme catalyses a 1-(1,2-saturated alkyl)-2-acyl-sn-glycero-3-phosphoethanolamine + 2 Fe(II)-[cytochrome b5] + O2 + 2 H(+) = a 1-O-(1Z-alkenyl)-2-acyl-sn-glycero-3-phosphoethanolamine + 2 Fe(III)-[cytochrome b5] + 2 H2O. It catalyses the reaction 1-O-(13-methyltetradecyl)-2-(13-methyltetradecanoyl)-sn-glycero-3-phosphoethanolamine + 2 Fe(II)-[cytochrome b5] + O2 + 2 H(+) = 1-O-(1Z-13-methyltetradecenyl)-2-(13-methyltetradecanoyl)-sn-glycero-3-phosphoethanolamine + 2 Fe(III)-[cytochrome b5] + 2 H2O. Plasmanylethanolamine desaturase involved in plasmalogen biogenesis in the membrane, required for light-induced carotenogenesis. Plasmalogens are glycerophospholipids with a hydrocarbon chain linked by a vinyl ether bond at the glycerol sn-1 position, and are involved in antioxidative and signaling mechanisms, most precisely in sensing photooxidative stress through singlet oxygen. Participates in the light-dependent inactivation of the antisigma factor CarR. Mediates signaling by singlet oxygen, generated via photoexcited protoporphyrin IX. In Myxococcus xanthus, this protein is Plasmanylethanolamine desaturase.